The sequence spans 131 residues: Small ribosomal subunit protein uS8 (131 aa).

It belongs to the universal ribosomal protein uS8 family. Part of the 30S ribosomal subunit. Contacts proteins S5 and S12.

Functionally, one of the primary rRNA binding proteins, it binds directly to 16S rRNA central domain where it helps coordinate assembly of the platform of the 30S subunit. The chain is Small ribosomal subunit protein uS8 from Chlorobium luteolum (strain DSM 273 / BCRC 81028 / 2530) (Pelodictyon luteolum).